Reading from the N-terminus, the 467-residue chain is H(+)/Cl(-) exchange transporter ClcA (467 aa).

At 1–30 (MTKRERIIQSVLVKVPKDAINQFLSHGSTP) the chain is on the cytoplasmic side. The helical transmembrane segment at 31-67 (ISVLFLAALVGVLAGLVGTYFEIAVHFVSETRTEWLK) threads the bilayer. The Periplasmic segment spans residues 68 to 74 (SEIGHLL). Residues 75–98 (PLWLAAILISAALAFVGYFLVHRF) traverse the membrane as a helical segment. Positions 104–108 (GSGIP) match the Selectivity filter part_1 motif. Serine 105 serves as a coordination point for chloride. The helical intramembrane region spans 107-114 (IPEIEGAM). Residues 115-121 (DNIRPVR) are Cytoplasmic-facing. The next 2 membrane-spanning stretches (helical) occupy residues 122–139 (WWRV…ALGS) and 146–164 (EGPT…TDIF). Residues 144–148 (GREGP) carry the Selectivity filter part_2 motif. The Cytoplasmic portion of the chain corresponds to 165 to 174 (RVKDDDTRHS). 2 consecutive intramembrane regions (helical) follow at residues 175-187 (LLAS…LAAA) and 191-199 (PLAGIMFVV). Residues 200–212 (EEMRPQFRYSLIS) lie on the Cytoplasmic side of the membrane. Residues 213–230 (IRAVIISAVMANIVFRAI) traverse the membrane as a helical segment. The Periplasmic segment spans residues 231–250 (NGQDAVITMPQYQPPELKAL). A helical membrane pass occupies residues 251–279 (WLFLLLGGLFGVFGVLFNKLVTVAQDAFV). The Cytoplasmic portion of the chain corresponds to 280–285 (ALHKND). Residues 286-307 (RKRYLITGTCLGGIFGLLLLYV) form a helical membrane-spanning segment. Topologically, residues 308-327 (PELTGGGIHLIPDVTNGNYS) are periplasmic. The next 2 helical transmembrane spans lie at 328 to 347 (VSLL…ICFG) and 353 to 374 (GIFA…ATAK). A Selectivity filter part_3 motif is present at residues 353–357 (GIFAP). Chloride-binding residues include isoleucine 354 and phenylalanine 355. Topologically, residues 375 to 384 (ILLPDLPIEP) are periplasmic. Residues 385 to 399 (GMFAIAGMGALFAAT) constitute an intramembrane region (helical). Residues 400 to 402 (VRA) constitute an intramembrane region (note=Loop between two helices). The segment at residues 403 to 414 (PITGILLVIEMT) is an intramembrane region (helical). The note=Loop between two helices intramembrane region spans 415–419 (NNYYL). A helical membrane pass occupies residues 420 to 436 (ILPLIITSLGAVICAQI). Over 437–467 (CGGKPIYSQLLHRTIKNDKLRQQDLPEQQNS) the chain is Cytoplasmic. Tyrosine 443 contributes to the chloride binding site.

The protein belongs to the chloride channel (TC 2.A.49) family. ClcA subfamily. As to quaternary structure, homodimer.

The protein localises to the cell inner membrane. It carries out the reaction 2 chloride(in) + H(+)(out) = 2 chloride(out) + H(+)(in). Its function is as follows. Proton-coupled chloride transporter. Functions as antiport system and exchanges two chloride ions for 1 proton. Probably acts as an electrical shunt for an outwardly-directed proton pump that is linked to amino acid decarboxylation, as part of the extreme acid resistance (XAR) response. This chain is H(+)/Cl(-) exchange transporter ClcA, found in Vibrio vulnificus (strain CMCP6).